The sequence spans 304 residues: Acetyl-coenzyme A carboxylase carboxyl transferase subunit beta (304 aa).

The 270-residue stretch at valine 23–valine 292 folds into the CoA carboxyltransferase N-terminal domain. Positions 27, 30, 46, and 49 each coordinate Zn(2+). Residues cysteine 27–cysteine 49 form a C4-type zinc finger. Residues asparagine 284–alanine 304 are disordered. Residues proline 295–alanine 304 are compositionally biased toward pro residues.

The protein belongs to the AccD/PCCB family. In terms of assembly, acetyl-CoA carboxylase is a heterohexamer composed of biotin carboxyl carrier protein (AccB), biotin carboxylase (AccC) and two subunits each of ACCase subunit alpha (AccA) and ACCase subunit beta (AccD). Zn(2+) is required as a cofactor.

It is found in the cytoplasm. The enzyme catalyses N(6)-carboxybiotinyl-L-lysyl-[protein] + acetyl-CoA = N(6)-biotinyl-L-lysyl-[protein] + malonyl-CoA. Its pathway is lipid metabolism; malonyl-CoA biosynthesis; malonyl-CoA from acetyl-CoA: step 1/1. Functionally, component of the acetyl coenzyme A carboxylase (ACC) complex. Biotin carboxylase (BC) catalyzes the carboxylation of biotin on its carrier protein (BCCP) and then the CO(2) group is transferred by the transcarboxylase to acetyl-CoA to form malonyl-CoA. In Shigella boydii serotype 4 (strain Sb227), this protein is Acetyl-coenzyme A carboxylase carboxyl transferase subunit beta.